The sequence spans 57 residues: Benzylsuccinate synthase gamma subunit (57 aa).

Heterohexamer composed of 2 alpha subunits, 2 beta subunits and 2 gamma subunits.

The enzyme catalyses toluene + fumarate = 2-benzylsuccinate. The protein operates within xenobiotic degradation; toluene degradation. With respect to regulation, activated by the benzylsuccinate synthase activating enzyme BssD. Rapidly inactivated by oxygen. Catalyzes the addition of fumarate to the methyl group of toluene, leading to the formation of benzylsuccinate. The chain is Benzylsuccinate synthase gamma subunit (bssC) from Thauera aromatica.